Here is a 386-residue protein sequence, read N- to C-terminus: Agamous-like MADS-box protein AGL30 (386 aa).

An MADS-box domain is found at 1-53 (MGRVKLKIKKLENTNGRQSTFAKRKNGILKKANELSILCDIDIVLLMFSPTGK). Residues 341 to 360 (PDSSAYNDNTNQTRFGSSSS) are disordered. Polar residues predominate over residues 344-356 (SAYNDNTNQTRFG).

Forms heterodimers with AGL66 and AGL104. As to expression, expressed in pollen.

It is found in the nucleus. Its function is as follows. Probable transcription factor that forms heterodimers with the MADS-box proteins AGL66 and AGL104 and is involved in the regulation of pollen maturation at the late stages of pollen development and pollen tube growth. The chain is Agamous-like MADS-box protein AGL30 from Arabidopsis thaliana (Mouse-ear cress).